A 262-amino-acid chain; its full sequence is Taurine import ATP-binding protein TauB (262 aa).

The ABC transporter domain maps to 4 to 233 (LELERISAQY…RYAAGESARA (230 aa)). 38-45 (GPSGSGKT) is an ATP binding site.

Belongs to the ABC transporter superfamily. Taurine importer (TC 3.A.1.17.1) family. As to quaternary structure, the complex is composed of two ATP-binding proteins (TauB), two transmembrane proteins (TauC) and a solute-binding protein (TauA).

It is found in the cell inner membrane. It carries out the reaction taurine(out) + ATP + H2O = taurine(in) + ADP + phosphate + H(+). Functionally, part of the ABC transporter complex TauABC involved in taurine import. Responsible for energy coupling to the transport system. The sequence is that of Taurine import ATP-binding protein TauB from Pseudomonas putida (Arthrobacter siderocapsulatus).